The sequence spans 151 residues: MVKAVCVLAGSGDVKGVVRFEQQDDGDVTVEGKIEGLTDGNHGFHIHVFGDNTNGCLSAGPHFNPQNKNHGSPKDADRHVGDLGNVTAEGGVAQFKFTDPQISLKGERSIIGRTAVVHEKQDDLGKGGDDESLKTGNAGGRLACGVIGFCP.

Cys6 is lipidated: S-palmitoyl cysteine. Positions 45, 47, and 62 each coordinate Cu cation. Cys56 and Cys144 are disulfide-bonded. Positions 62, 70, 79, and 82 each coordinate Zn(2+). His118 is a binding site for Cu cation.

Belongs to the Cu-Zn superoxide dismutase family. As to quaternary structure, homodimer, and heterodimer of Superoxide dismutase [Cu-Zn] A and B. It depends on Cu cation as a cofactor. The cofactor is Zn(2+).

The protein localises to the cytoplasm. It localises to the nucleus. It carries out the reaction 2 superoxide + 2 H(+) = H2O2 + O2. Its function is as follows. Destroys radicals which are normally produced within the cells and which are toxic to biological systems. This chain is Superoxide dismutase [Cu-Zn] A (sod1-a), found in Xenopus laevis (African clawed frog).